Here is a 34-residue protein sequence, read N- to C-terminus: ECRYLFGGCKTTADCCKHLGCRTDLYYCAWDGTF.

Disulfide bonds link C2/C16, C9/C21, and C15/C28. The residue at position 34 (F34) is a Phenylalanine amide.

This sequence belongs to the neurotoxin 10 (Hwtx-1) family. 09 (HaTx) subfamily. Expressed by the venom gland.

The protein resides in the secreted. Gating-modifier toxin that potently and selectively acts on Nav1.1/SCN1A and Nav1.3/SCN3A. It enhances hNav1.1/SCN1A currents and delays fast inactivation of the channel (EC(50)=11.6 nM), leading to a sustained current. Similar effects are observed at Nav1.3/SCN3A (EC(50)=11.8 nM), but with less sustained currents. When tested on Nav1.2/SCN2A, the native toxin decreases the peak current by 50% at saturating concentration, whereas the recombinant toxin only shows a weak decrease of peak current. The native toxin specifically activates the voltage-gated sodium channel Nav1.1/SCN1A in somatosensory neurons to elicit acute pain and mechanical allodynia. When tested on Nav1.1/SCN1A, the toxin induces a hyperpolarising shift of the voltage-dependence of steady-state activation, and induces a depolarizing shift in the voltage dependence of inactivation. In addition, it does not modify the recovery from fast inactivation in Nav1.1/SCN1A. The toxin hydrophobic face probably interacts with the domain IV voltage-sensor of Nav1.1/SCN1A and Nav1.3/SCN3A and may trap the voltage-sensing S4 helix in a partially activated state. In vivo, intracerebroventricular injection into mice elicits convulsions, spasms, tremors and rapid death. When injected into mouse hindpaw, the toxin elicits an immediate and robust response to pain. However, intraplantar injection of toxin does not cause neurogenic inflammation or alter sensitivity to heat, indicative of a modality-specific effect on mechanosensitive neurons. The polypeptide is Delta-theraphotoxin-Hm1b (Heteroscodra maculata (Togo starburst tarantula)).